The primary structure comprises 476 residues: Ribosomal RNA small subunit methyltransferase F (476 aa).

S-adenosyl-L-methionine is bound by residues Ala-124–Lys-130, Glu-148, Asp-175, and Asp-193. The active-site Nucleophile is Cys-246.

The protein belongs to the class I-like SAM-binding methyltransferase superfamily. RsmB/NOP family.

The protein resides in the cytoplasm. The enzyme catalyses cytidine(1407) in 16S rRNA + S-adenosyl-L-methionine = 5-methylcytidine(1407) in 16S rRNA + S-adenosyl-L-homocysteine + H(+). In terms of biological role, specifically methylates the cytosine at position 1407 (m5C1407) of 16S rRNA. In Photobacterium profundum (strain SS9), this protein is Ribosomal RNA small subunit methyltransferase F.